The chain runs to 120 residues: UPF0344 protein BCAH187_A1308 (120 aa).

A run of 4 helical transmembrane segments spans residues 6 to 26 (ITAW…YSAG), 32 to 52 (VHMG…WLYL), 64 to 84 (WYGL…MVLV), and 91 to 111 (ATGA…YLGL).

This sequence belongs to the UPF0344 family.

It localises to the cell membrane. The chain is UPF0344 protein BCAH187_A1308 from Bacillus cereus (strain AH187).